The sequence spans 354 residues: Holliday junction branch migration complex subunit RuvB (354 aa).

Residues 1-22 (MTIQTDDFAPAPPRVVSAAPAS) form a disordered region. The tract at residues 5–193 (TDDFAPAPPR…FGIVARLEFY (189 aa)) is large ATPase domain (RuvB-L). ATP-binding positions include L32, R33, G74, K77, T78, T79, 140–142 (EDY), R183, Y193, and R230. T78 contributes to the Mg(2+) binding site. The tract at residues 194–264 (TPEELALIVR…IAHKALVMLD (71 aa)) is small ATPAse domain (RuvB-S). Residues 267 to 354 (PQGFDLMDRK…RSDGQDLFGI (88 aa)) form a head domain (RuvB-H) region. 3 residues coordinate DNA: R303, R322, and R327.

Belongs to the RuvB family. As to quaternary structure, homohexamer. Forms an RuvA(8)-RuvB(12)-Holliday junction (HJ) complex. HJ DNA is sandwiched between 2 RuvA tetramers; dsDNA enters through RuvA and exits via RuvB. An RuvB hexamer assembles on each DNA strand where it exits the tetramer. Each RuvB hexamer is contacted by two RuvA subunits (via domain III) on 2 adjacent RuvB subunits; this complex drives branch migration. In the full resolvosome a probable DNA-RuvA(4)-RuvB(12)-RuvC(2) complex forms which resolves the HJ.

The protein resides in the cytoplasm. The enzyme catalyses ATP + H2O = ADP + phosphate + H(+). Functionally, the RuvA-RuvB-RuvC complex processes Holliday junction (HJ) DNA during genetic recombination and DNA repair, while the RuvA-RuvB complex plays an important role in the rescue of blocked DNA replication forks via replication fork reversal (RFR). RuvA specifically binds to HJ cruciform DNA, conferring on it an open structure. The RuvB hexamer acts as an ATP-dependent pump, pulling dsDNA into and through the RuvAB complex. RuvB forms 2 homohexamers on either side of HJ DNA bound by 1 or 2 RuvA tetramers; 4 subunits per hexamer contact DNA at a time. Coordinated motions by a converter formed by DNA-disengaged RuvB subunits stimulates ATP hydrolysis and nucleotide exchange. Immobilization of the converter enables RuvB to convert the ATP-contained energy into a lever motion, pulling 2 nucleotides of DNA out of the RuvA tetramer per ATP hydrolyzed, thus driving DNA branch migration. The RuvB motors rotate together with the DNA substrate, which together with the progressing nucleotide cycle form the mechanistic basis for DNA recombination by continuous HJ branch migration. Branch migration allows RuvC to scan DNA until it finds its consensus sequence, where it cleaves and resolves cruciform DNA. In Variovorax paradoxus (strain S110), this protein is Holliday junction branch migration complex subunit RuvB.